A 170-amino-acid polypeptide reads, in one-letter code: ATP synthase subunit b (170 aa).

A helical transmembrane segment spans residues 11–31 (AFTFGDAFFTLFAFAILLVLI).

This sequence belongs to the ATPase B chain family. F-type ATPases have 2 components, F(1) - the catalytic core - and F(0) - the membrane proton channel. F(1) has five subunits: alpha(3), beta(3), gamma(1), delta(1), epsilon(1). F(0) has three main subunits: a(1), b(2) and c(10-14). The alpha and beta chains form an alternating ring which encloses part of the gamma chain. F(1) is attached to F(0) by a central stalk formed by the gamma and epsilon chains, while a peripheral stalk is formed by the delta and b chains.

Its subcellular location is the cell membrane. Its function is as follows. F(1)F(0) ATP synthase produces ATP from ADP in the presence of a proton or sodium gradient. F-type ATPases consist of two structural domains, F(1) containing the extramembraneous catalytic core and F(0) containing the membrane proton channel, linked together by a central stalk and a peripheral stalk. During catalysis, ATP synthesis in the catalytic domain of F(1) is coupled via a rotary mechanism of the central stalk subunits to proton translocation. Component of the F(0) channel, it forms part of the peripheral stalk, linking F(1) to F(0). This chain is ATP synthase subunit b, found in Listeria welshimeri serovar 6b (strain ATCC 35897 / DSM 20650 / CCUG 15529 / CIP 8149 / NCTC 11857 / SLCC 5334 / V8).